The sequence spans 303 residues: Zinc import ATP-binding protein ZnuC (303 aa).

An ABC transporter domain is found at 17 to 232 (VSLENVGVLR…PEYVRLFGSR (216 aa)). 49–56 (GPNGSGKS) provides a ligand contact to ATP. The segment at 263-303 (DHCHPDDGHHAHEHGHAGHEHDHDHPDHAHPHAHEAGERHA) is disordered.

This sequence belongs to the ABC transporter superfamily. Zinc importer (TC 3.A.1.15.5) family. The complex is composed of two ATP-binding proteins (ZnuC), two transmembrane proteins (ZnuB) and a solute-binding protein (ZnuA).

It localises to the cell inner membrane. It catalyses the reaction Zn(2+)(out) + ATP(in) + H2O(in) = Zn(2+)(in) + ADP(in) + phosphate(in) + H(+)(in). In terms of biological role, part of the ABC transporter complex ZnuABC involved in zinc import. Responsible for energy coupling to the transport system. This chain is Zinc import ATP-binding protein ZnuC, found in Rhizobium johnstonii (strain DSM 114642 / LMG 32736 / 3841) (Rhizobium leguminosarum bv. viciae).